A 696-amino-acid polypeptide reads, in one-letter code: Glycine--tRNA ligase beta subunit (696 aa).

Belongs to the class-II aminoacyl-tRNA synthetase family. In terms of assembly, tetramer of two alpha and two beta subunits.

It is found in the cytoplasm. The catalysed reaction is tRNA(Gly) + glycine + ATP = glycyl-tRNA(Gly) + AMP + diphosphate. The polypeptide is Glycine--tRNA ligase beta subunit (Oleidesulfovibrio alaskensis (strain ATCC BAA-1058 / DSM 17464 / G20) (Desulfovibrio alaskensis)).